The following is a 361-amino-acid chain: MEEREWGARSARAGSPASPPSPRLDVSSYSFDPLLALYAPRLPPIPYPNAPCFNNVAEYESFLKGGRTGRGRARGTGEPASAGTSTGTSTGAGSSSRARRRAAPTPDPERIQRLRRLMVVKEDTDGTAGARRQGPGRSKKAPRNVLTRMPLHEGSPLGELHRCIREGVKVNVHIRTFKGLRGVCTGFLVAFDKFWNMALTDVDETYRKPVLGKAYERDSSLTLTRLFDRLKLQDSSKKEADSKSAVEDSTLSRYSQTSTWKVASVWGRGDTDRSSHRRSRSVPSSLQASAREESRSELSGRTTRTEGSSVGGTFSRATTLSRGQSRKKKRKPKVDYQQVFTRHINQIFIRGENVLLVHLAQ.

The tract at residues Met-1–Val-26 is disordered. A phosphoserine mark is found at Ser-15 and Ser-21. Arg-41 carries the post-translational modification Omega-N-methylarginine. Residues Arg-67 to Pro-142 are disordered. A compositionally biased stretch (low complexity) spans Thr-76–Ser-96. A Glycyl lysine isopeptide (Lys-Gly) (interchain with G-Cter in SUMO2) cross-link involves residue Lys-121. Ser-155 is subject to Phosphoserine. The Sm domain occupies Ser-155–Leu-230. Positions Val-172–Thr-205 are SM 1. Residues Arg-268–Asp-335 are disordered. Phosphoserine is present on Ser-281. The segment covering Gly-307–Gly-323 has biased composition (polar residues). An SM 2 region spans residues Ile-344–Val-357.

This sequence belongs to the snRNP Sm proteins family. In terms of assembly, component of the heptameric ring U7 snRNP complex, or U7 Sm protein core complex, at least composed of LSM10, LSM11, SNRPB, SNRPD3, SNRPE, SNRPF, SNRPG and U7 snRNA. Formation of the U7 snRNP is an ATP-dependent process mediated by a specialized SMN complex containing at least the Sm protein core complex and additionally, the U7-specific LSM10 and LSM11 proteins. Identified in a histone pre-mRNA complex, at least composed of ERI1, LSM11, SLBP, SNRPB, SYNCRIP and YBX1. Interacts (via the Sm domains) with CLNS1A. Interacts with PRMT5, SMN, ZNF473 and WDR77. Post-translationally, not methylated.

Its subcellular location is the nucleus. Functionally, component of the U7 snRNP complex that is involved in the histone 3'-end pre-mRNA processing. Increases U7 snRNA levels but not histone 3'-end pre-mRNA processing activity, when overexpressed. Required for cell cycle progression from G1 to S phases. Binds specifically to the Sm-binding site of U7 snRNA. This is U7 snRNA-associated Sm-like protein LSm11 from Mus musculus (Mouse).